Reading from the N-terminus, the 332-residue chain is GTP cyclohydrolase-2 (332 aa).

2 disordered regions span residues 1–20 (MASK…SETH) and 25–46 (PLLS…IPPE). The span at 29-41 (PTLTPSHIPSQTP) shows a compositional bias: polar residues. GTP is bound at residue 171-175 (RIHSE). Positions 176, 187, and 189 each coordinate Zn(2+). GTP-binding positions include Q192, 214 to 216 (EGR), and T236. Residue D248 is the Proton acceptor of the active site. Catalysis depends on R250, which acts as the Nucleophile. Positions 271 and 276 each coordinate GTP.

This sequence belongs to the GTP cyclohydrolase II family. Zn(2+) is required as a cofactor.

The enzyme catalyses GTP + 4 H2O = 2,5-diamino-6-hydroxy-4-(5-phosphoribosylamino)-pyrimidine + formate + 2 phosphate + 3 H(+). It participates in cofactor biosynthesis; riboflavin biosynthesis; 5-amino-6-(D-ribitylamino)uracil from GTP: step 1/4. Functionally, catalyzes the conversion of GTP to 2,5-diamino-6-ribosylamino-4(3H)-pyrimidinone 5'-phosphate (DARP), formate and pyrophosphate. The chain is GTP cyclohydrolase-2 (RIB1) from Meyerozyma guilliermondii (strain ATCC 6260 / CBS 566 / DSM 6381 / JCM 1539 / NBRC 10279 / NRRL Y-324) (Yeast).